The primary structure comprises 522 residues: E3 ubiquitin-protein ligase DMA2 (522 aa).

Disordered regions lie at residues Met-1–Ser-56 and Gln-69–Ser-92. A compositionally biased stretch (low complexity) spans Ala-14–Ser-35. A compositionally biased stretch (polar residues) spans Gly-36–Asn-49. Ser-206 bears the Phosphoserine mark. Glycyl lysine isopeptide (Lys-Gly) (interchain with G-Cter in ubiquitin) cross-links involve residues Lys-211, Lys-256, Lys-258, Lys-288, Lys-310, Lys-333, Lys-343, Lys-346, Lys-366, Lys-406, Lys-412, and Lys-423. The FHA domain occupies Leu-295–Leu-358. An RING-type zinc finger spans residues Cys-433–Arg-477.

This sequence belongs to the DMA1 family. In terms of processing, UBC4-dependent autoubiquitination occurs at Lys-211, Lys-258, Lys-288, Lys-310, Lys-333, Lys-343, Lys-346, Lys-366, Lys-406, Lys-412 and Lys-423. UBC4-dependent autoubiquitination is responsible for DMA2 turnover. UBC13/MMS2-dependent autoubiquitination occurs at Lys-258, Lys-310, Lys-346 and Lys-366. Lys-211, Lys-256, Lys-288, Lys-310, Lys-343, Lys-258, Lys-366 and Lys-412 are also ubiquitinated in trans by DMA1 E3 ligase in association with UBC4.

The protein resides in the cytoplasm. The enzyme catalyses S-ubiquitinyl-[E2 ubiquitin-conjugating enzyme]-L-cysteine + [acceptor protein]-L-lysine = [E2 ubiquitin-conjugating enzyme]-L-cysteine + N(6)-ubiquitinyl-[acceptor protein]-L-lysine.. Its function is as follows. E3 ubiquitin-protein ligase which functions in cell cycle retarding in conjunction with the UBC4 and UBC13/MMS2 complex, 2 E2 ubiquitin conjugating enzymes. Involved in nutritional control of the cell cycle. Required for proper spindle positioning, likely regulating septin ring deposition at the bud neck. The polypeptide is E3 ubiquitin-protein ligase DMA2 (DMA2) (Saccharomyces cerevisiae (strain ATCC 204508 / S288c) (Baker's yeast)).